The chain runs to 100 residues: NADH-quinone oxidoreductase subunit K (100 aa).

3 helical membrane passes run 4 to 24, 29 to 49, and 60 to 80; these read LSHA…AIIV, LFIL…FVIV, and IMYI…LALL.

Belongs to the complex I subunit 4L family. In terms of assembly, NDH-1 is composed of 13 different subunits. Subunits NuoA, H, J, K, L, M, N constitute the membrane sector of the complex.

The protein resides in the cell inner membrane. It catalyses the reaction a quinone + NADH + 5 H(+)(in) = a quinol + NAD(+) + 4 H(+)(out). In terms of biological role, NDH-1 shuttles electrons from NADH, via FMN and iron-sulfur (Fe-S) centers, to quinones in the respiratory chain. The immediate electron acceptor for the enzyme in this species is believed to be ubiquinone. Couples the redox reaction to proton translocation (for every two electrons transferred, four hydrogen ions are translocated across the cytoplasmic membrane), and thus conserves the redox energy in a proton gradient. This chain is NADH-quinone oxidoreductase subunit K, found in Blochmanniella pennsylvanica (strain BPEN).